The following is a 320-amino-acid chain: Cytochrome f (320 aa).

The first 35 residues, 1–35 (MQTRNAFSCIKEGITRSISISIMIYIIIRAPISNA), serve as a signal peptide directing secretion. Residues Y36, C56, C59, and H60 each coordinate heme. The chain crosses the membrane as a helical span at residues 286–305 (VQGLLFFFASIILAQIFLVL).

It belongs to the cytochrome f family. The 4 large subunits of the cytochrome b6-f complex are cytochrome b6, subunit IV (17 kDa polypeptide, petD), cytochrome f and the Rieske protein, while the 4 small subunits are PetG, PetL, PetM and PetN. The complex functions as a dimer. The cofactor is heme.

It is found in the plastid. The protein localises to the chloroplast thylakoid membrane. Its function is as follows. Component of the cytochrome b6-f complex, which mediates electron transfer between photosystem II (PSII) and photosystem I (PSI), cyclic electron flow around PSI, and state transitions. This chain is Cytochrome f (petA), found in Glycine max (Soybean).